We begin with the raw amino-acid sequence, 264 residues long: Glutamate 5-kinase (264 aa).

Residue lysine 15 coordinates ATP. Substrate contacts are provided by serine 55, aspartate 142, and asparagine 154. Residues 174–175 and 216–222 each bind ATP; these read SD and TGGIATK.

This sequence belongs to the glutamate 5-kinase family.

It is found in the cytoplasm. The enzyme catalyses L-glutamate + ATP = L-glutamyl 5-phosphate + ADP. It functions in the pathway amino-acid biosynthesis; L-proline biosynthesis; L-glutamate 5-semialdehyde from L-glutamate: step 1/2. Functionally, catalyzes the transfer of a phosphate group to glutamate to form L-glutamate 5-phosphate. This is Glutamate 5-kinase from Alkaliphilus metalliredigens (strain QYMF).